The chain runs to 252 residues: 3-dehydroquinate dehydratase (252 aa).

3-dehydroquinate contacts are provided by residues serine 21, 46–48 (EWR), and arginine 82. Catalysis depends on histidine 143, which acts as the Proton donor/acceptor. Residue lysine 170 is the Schiff-base intermediate with substrate of the active site. Residues arginine 213, serine 232, and glutamine 236 each contribute to the 3-dehydroquinate site.

This sequence belongs to the type-I 3-dehydroquinase family. Dimer of dimers.

The catalysed reaction is 3-dehydroquinate = 3-dehydroshikimate + H2O. Its pathway is metabolic intermediate biosynthesis; chorismate biosynthesis; chorismate from D-erythrose 4-phosphate and phosphoenolpyruvate: step 3/7. Inhibited by (2R)-2-methyl-3-dehydroquinic acid. Its function is as follows. Involved in the third step of the chorismate pathway, which leads to the biosynthesis of aromatic amino acids. Catalyzes the cis-dehydration of 3-dehydroquinate (DHQ) and introduces the first double bond of the aromatic ring to yield 3-dehydroshikimate. The reaction involves the formation of an imine intermediate between the keto group of 3-dehydroquinate and the epsilon-amino group of Lys-170 at the active site. The protein is 3-dehydroquinate dehydratase of Salmonella typhi.